A 156-amino-acid polypeptide reads, in one-letter code: Endogenous retrovirus group K member 9 Pro protein (156 aa).

In terms of domain architecture, Peptidase A2 spans 21 to 96; the sequence is FEGLVDTGAD…IPLNLWGRDL (76 aa). Asp26 is a catalytic residue. A G-patch domain is found at 111-156; that stretch reads YSPTSQKIMTKRGYIPGKGLGKNEDGIKIPFEAKINQKREGIGYPF.

This sequence belongs to the peptidase A2 family. HERV class-II K(HML-2) subfamily. As to quaternary structure, active as a homodimer. In terms of processing, autoproteolytically processed at the N-terminus. Expected C-terminal autoprocessing not detected. The sequence shown is that of the processed Pro protein.

The enzyme catalyses Processing at the authentic HIV-1 PR recognition site and release of the mature p17 matrix and the p24 capsid protein, as a result of the cleavage of the -SQNY-|-PIVQ- cleavage site.. Retroviral proteases have roles in the processing of the primary translation products and the maturation of the viral particle. Endogenous Pro proteins may have kept, lost or modified their original function during evolution. This is Endogenous retrovirus group K member 9 Pro protein (ERVK-9) from Homo sapiens (Human).